The chain runs to 436 residues: Histidinol dehydrogenase (436 aa).

NAD(+)-binding residues include tyrosine 136, glutamine 198, and asparagine 221. The substrate site is built by serine 244, glutamine 266, and histidine 269. Positions 266 and 269 each coordinate Zn(2+). Active-site proton acceptor residues include glutamate 334 and histidine 335. Positions 335, 368, 422, and 427 each coordinate substrate. Zn(2+) is bound at residue aspartate 368. Position 427 (histidine 427) interacts with Zn(2+).

This sequence belongs to the histidinol dehydrogenase family. Zn(2+) is required as a cofactor.

The enzyme catalyses L-histidinol + 2 NAD(+) + H2O = L-histidine + 2 NADH + 3 H(+). Its pathway is amino-acid biosynthesis; L-histidine biosynthesis; L-histidine from 5-phospho-alpha-D-ribose 1-diphosphate: step 9/9. Its function is as follows. Catalyzes the sequential NAD-dependent oxidations of L-histidinol to L-histidinaldehyde and then to L-histidine. This is Histidinol dehydrogenase from Dehalococcoides mccartyi (strain ATCC BAA-2266 / KCTC 15142 / 195) (Dehalococcoides ethenogenes (strain 195)).